Consider the following 416-residue polypeptide: Serine hydroxymethyltransferase (416 aa).

(6S)-5,6,7,8-tetrahydrofolate-binding positions include Leu-118 and 122–124 (GHL). N6-(pyridoxal phosphate)lysine is present on Lys-226. (6S)-5,6,7,8-tetrahydrofolate-binding positions include Glu-242 and 350–352 (SPF).

Belongs to the SHMT family. As to quaternary structure, homodimer. It depends on pyridoxal 5'-phosphate as a cofactor.

It localises to the cytoplasm. The enzyme catalyses (6R)-5,10-methylene-5,6,7,8-tetrahydrofolate + glycine + H2O = (6S)-5,6,7,8-tetrahydrofolate + L-serine. It participates in one-carbon metabolism; tetrahydrofolate interconversion. The protein operates within amino-acid biosynthesis; glycine biosynthesis; glycine from L-serine: step 1/1. Functionally, catalyzes the reversible interconversion of serine and glycine with tetrahydrofolate (THF) serving as the one-carbon carrier. This reaction serves as the major source of one-carbon groups required for the biosynthesis of purines, thymidylate, methionine, and other important biomolecules. Also exhibits THF-independent aldolase activity toward beta-hydroxyamino acids, producing glycine and aldehydes, via a retro-aldol mechanism. This chain is Serine hydroxymethyltransferase, found in Helicobacter pylori (strain G27).